Reading from the N-terminus, the 68-residue chain is Protein VNG_1110C (68 aa).

The protein is Protein VNG_1110C of Halobacterium salinarum (strain ATCC 700922 / JCM 11081 / NRC-1) (Halobacterium halobium).